An 88-amino-acid polypeptide reads, in one-letter code: Small ribosomal subunit protein bS16 (88 aa).

This sequence belongs to the bacterial ribosomal protein bS16 family.

The polypeptide is Small ribosomal subunit protein bS16 (Geobacter metallireducens (strain ATCC 53774 / DSM 7210 / GS-15)).